The primary structure comprises 225 residues: Ribose-5-phosphate isomerase A (225 aa).

Residues 27-30 (SGST), 80-83 (DGAD), and 93-96 (KGGG) each bind substrate. Glu-102 acts as the Proton acceptor in catalysis. Residue Lys-120 participates in substrate binding.

Belongs to the ribose 5-phosphate isomerase family. As to quaternary structure, homodimer.

It carries out the reaction aldehydo-D-ribose 5-phosphate = D-ribulose 5-phosphate. Its pathway is carbohydrate degradation; pentose phosphate pathway; D-ribose 5-phosphate from D-ribulose 5-phosphate (non-oxidative stage): step 1/1. In terms of biological role, catalyzes the reversible conversion of ribose-5-phosphate to ribulose 5-phosphate. The protein is Ribose-5-phosphate isomerase A of Korarchaeum cryptofilum (strain OPF8).